Reading from the N-terminus, the 612-residue chain is Coagulation factor X-activating enzyme heavy chain (612 aa).

A signal peptide spans 1–20 (MMQVLLVTISLAVFPYQGSS). Residues 21 to 193 (IILESGNVND…KKASQLVATS (173 aa)) constitute a propeptide, or 194. One can recognise a Peptidase M12B domain in the interval 201–395 (TFIELVIVVD…YKPKCILNPP (195 aa)). Glu204 serves as a coordination point for Ca(2+). Residue Asn259 is glycosylated (N-linked (GlcNAc...) asparagine). Asp286 serves as a coordination point for Ca(2+). 3 cysteine pairs are disulfide-bonded: Cys310-Cys390, Cys350-Cys374, and Cys352-Cys357. His335 lines the Zn(2+) pocket. Glu336 is an active-site residue. Zn(2+)-binding residues include His339 and His345. N-linked (GlcNAc...) asparagine glycosylation is found at Asn353 and Asn373. Cys390, Asn393, Ile405, Asn408, Glu412, Glu415, and Asp418 together coordinate Ca(2+). The Disintegrin domain occupies 403 to 489 (PPICGNEIWE…ECPADGFHAN (87 aa)). Cysteines 461 and 481 form a disulfide. The D/ECD-tripeptide signature appears at 467-469 (ECD).

This sequence belongs to the venom metalloproteinase (M12B) family. P-III subfamily. P-IIId sub-subfamily. As to quaternary structure, heterotrimer; disulfide-linked. The heterotrimer consists of 1 heavy chain and 2 light chains (lectins): LC1 and LC2 (AC Q7T045 and AC Q696W1). Requires Zn(2+) as cofactor. In terms of processing, N-glycosylated. Contains 8.0% of hexoses, 2.5% of hexosamines and 2.5% of sialic acids. Expressed by the venom gland.

The protein resides in the secreted. The catalysed reaction is Specifically activates several components of the blood clotting system, including coagulation factor X, coagulation factor IX and protein C by cleavage of Arg-|-Xaa bonds. Has no action on insulin B chain.. With respect to regulation, calcium is required for the activity of the heterotrimer. In terms of biological role, catalytic subunit of blood coagulation factor X-activating enzyme. Activates coagulation factor X (F10) by cleaving the Arg(234)-Ile(235) bond, activates coagulation factor IX (F9) by cleaving the Arg(226)-Val(227) bond and is also able to activate protein C (PROC). The sequence is that of Coagulation factor X-activating enzyme heavy chain from Macrovipera lebetinus (Levantine viper).